The chain runs to 492 residues: Cysteine--tRNA ligase (492 aa).

Residue Cys35 participates in Zn(2+) binding. The short motif at 37-47 is the 'HIGH' region element; that stretch reads PTVYSNVHLGN. Residues Cys230, His255, and Glu259 each coordinate Zn(2+). The 'KMSKS' region signature appears at 287–291; it reads KMAKS. Residue Lys290 participates in ATP binding.

The protein belongs to the class-I aminoacyl-tRNA synthetase family. Monomer. It depends on Zn(2+) as a cofactor.

The protein localises to the cytoplasm. The enzyme catalyses tRNA(Cys) + L-cysteine + ATP = L-cysteinyl-tRNA(Cys) + AMP + diphosphate. The sequence is that of Cysteine--tRNA ligase from Flavobacterium johnsoniae (strain ATCC 17061 / DSM 2064 / JCM 8514 / BCRC 14874 / CCUG 350202 / NBRC 14942 / NCIMB 11054 / UW101) (Cytophaga johnsonae).